A 495-amino-acid polypeptide reads, in one-letter code: GTPase Der (495 aa).

EngA-type G domains are found at residues 3 to 166 and 208 to 381; these read PVIA…MDAE and IKLA…DCST. Residues 9–16, 56–60, 118–121, 214–221, 261–265, and 326–329 each bind GTP; these read GRPNVGKS, DTGGI, NKTD, DTAGV, and NKWD. Positions 382-466 constitute a KH-like domain; the sequence is KRVGTSLLTR…PIRIQFKEGE (85 aa).

It belongs to the TRAFAC class TrmE-Era-EngA-EngB-Septin-like GTPase superfamily. EngA (Der) GTPase family. In terms of assembly, associates with the 50S ribosomal subunit.

Its function is as follows. GTPase that plays an essential role in the late steps of ribosome biogenesis. In Yersinia pseudotuberculosis serotype IB (strain PB1/+), this protein is GTPase Der.